Consider the following 200-residue polypeptide: Serine/arginine-rich splicing factor RSZ22 (200 aa).

Residues 2 to 71 (SRVYVGNLDP…NGWRVEQSHN (70 aa)) enclose the RRM domain. Basic and acidic residues predominate over residues 62 to 83 (NGWRVEQSHNRGERGGGGRGGD). 2 disordered regions span residues 62-97 (NGWRVEQSHNRGERGGGGRGGDRGGGGGGRGGRGGS) and 112-200 (RECR…RSRS). The span at 84 to 96 (RGGGGGGRGGRGG) shows a compositional bias: gly residues. A CCHC-type zinc finger spans residues 99–116 (LKCYECGETGHFARECRN). Residues 120-137 (TGRRRSKSRSRTPPRYRR) show a composition bias toward basic residues. S138, S147, S152, S160, S162, S174, and S200 each carry phosphoserine. A compositionally biased stretch (low complexity) spans 138–150 (SPSYGRRSYSPRA). The segment covering 151 to 166 (RSPPPPRRRSPSPPPA) has biased composition (pro residues).

This sequence belongs to the splicing factor SR family. RSZ subfamily. Component of the spliceosome. Interacts with AFC2, RS2Z33 and RNU1. In terms of processing, extensively phosphorylated on serine residues in the RS domain. Phosphorylated by AFC2. As to expression, expressed in primary and lateral roots, stems, petioles, abaxial and adaxial epidermis cells, trichomes, unopened flowers, anther filaments, anthers, stigma, pollen, pollen tube, ovule funiculi, integuments, embryo sac and developing seeds.

The protein resides in the nucleus speckle. It localises to the nucleus. The protein localises to the nucleolus. It is found in the nucleoplasm. Its subcellular location is the cytoplasm. Sequence-specific RNA-binding protein probably involved in pre-mRNA splicing. In vitro, can complement efficiently splicing-deficient mammalian SRSF7-depleted HeLa cell extract. The chain is Serine/arginine-rich splicing factor RSZ22 (RSZ22) from Arabidopsis thaliana (Mouse-ear cress).